The following is a 319-amino-acid chain: 4-hydroxy-3-methylbut-2-enyl diphosphate reductase (319 aa).

A [4Fe-4S] cluster-binding site is contributed by C18. H47 and H81 together coordinate (2E)-4-hydroxy-3-methylbut-2-enyl diphosphate. Dimethylallyl diphosphate is bound by residues H47 and H81. H47 and H81 together coordinate isopentenyl diphosphate. C103 contributes to the [4Fe-4S] cluster binding site. Residue H131 participates in (2E)-4-hydroxy-3-methylbut-2-enyl diphosphate binding. Residue H131 participates in dimethylallyl diphosphate binding. Position 131 (H131) interacts with isopentenyl diphosphate. The active-site Proton donor is E133. Residue T172 participates in (2E)-4-hydroxy-3-methylbut-2-enyl diphosphate binding. [4Fe-4S] cluster is bound at residue C202. (2E)-4-hydroxy-3-methylbut-2-enyl diphosphate is bound by residues S230, S231, N232, and S275. 4 residues coordinate dimethylallyl diphosphate: S230, S231, N232, and S275. Isopentenyl diphosphate is bound by residues S230, S231, N232, and S275.

It belongs to the IspH family. [4Fe-4S] cluster serves as cofactor.

It catalyses the reaction isopentenyl diphosphate + 2 oxidized [2Fe-2S]-[ferredoxin] + H2O = (2E)-4-hydroxy-3-methylbut-2-enyl diphosphate + 2 reduced [2Fe-2S]-[ferredoxin] + 2 H(+). The catalysed reaction is dimethylallyl diphosphate + 2 oxidized [2Fe-2S]-[ferredoxin] + H2O = (2E)-4-hydroxy-3-methylbut-2-enyl diphosphate + 2 reduced [2Fe-2S]-[ferredoxin] + 2 H(+). The protein operates within isoprenoid biosynthesis; dimethylallyl diphosphate biosynthesis; dimethylallyl diphosphate from (2E)-4-hydroxy-3-methylbutenyl diphosphate: step 1/1. It participates in isoprenoid biosynthesis; isopentenyl diphosphate biosynthesis via DXP pathway; isopentenyl diphosphate from 1-deoxy-D-xylulose 5-phosphate: step 6/6. Catalyzes the conversion of 1-hydroxy-2-methyl-2-(E)-butenyl 4-diphosphate (HMBPP) into a mixture of isopentenyl diphosphate (IPP) and dimethylallyl diphosphate (DMAPP). Acts in the terminal step of the DOXP/MEP pathway for isoprenoid precursor biosynthesis. The polypeptide is 4-hydroxy-3-methylbut-2-enyl diphosphate reductase (Beijerinckia indica subsp. indica (strain ATCC 9039 / DSM 1715 / NCIMB 8712)).